Consider the following 458-residue polypeptide: Monomethylamine methyltransferase MtmB1 (458 aa).

Pyl202 is a non-standard amino acid (pyrrolysine).

The protein belongs to the monomethylamine methyltransferase family. Can form a complex with MtmC.

The catalysed reaction is Co(I)-[methylamine-specific corrinoid protein] + methylamine + H(+) = methyl-Co(III)-[methylamine-specific corrinoid protein] + NH4(+). It participates in one-carbon metabolism; methanogenesis from methylamine. Catalyzes the transfer of the methyl group from monomethylamine to the corrinoid cofactor of MtmC. The protein is Monomethylamine methyltransferase MtmB1 (mtmB1) of Methanosarcina acetivorans (strain ATCC 35395 / DSM 2834 / JCM 12185 / C2A).